The sequence spans 1194 residues: Rho-associated protein kinase let-502 (1194 aa).

Residues Phe-68–Phe-330 enclose the Protein kinase domain. ATP is bound by residues Ile-74–Val-82 and Lys-97. The active-site Proton acceptor is Asp-190. The region spanning Lys-331 to Leu-402 is the AGC-kinase C-terminal domain. 2 coiled-coil regions span residues Glu-436–Arg-844 and Gly-875–Gln-933. The 63-residue stretch at Glu-784–Pro-846 folds into the RhoBD domain. The 211-residue stretch at Ile-961–Ser-1171 folds into the PH domain. Residues Arg-1085–Cys-1138 form a Phorbol-ester/DAG-type zinc finger.

This sequence belongs to the protein kinase superfamily. AGC Ser/Thr protein kinase family. In terms of assembly, interacts with rho-1. Mg(2+) is required as a cofactor.

The protein resides in the cytoplasm. It localises to the cytoskeleton. It is found in the cleavage furrow. The enzyme catalyses L-seryl-[protein] + ATP = O-phospho-L-seryl-[protein] + ADP + H(+). It catalyses the reaction L-threonyl-[protein] + ATP = O-phospho-L-threonyl-[protein] + ADP + H(+). Activated by rho-1 binding. Functionally, negatively regulates mel-11 to relieve the inhibition of mlc-4, allowing contraction of the circumferentially oriented microfilaments in epidermal cells and thereby regulating myosin II contractility during spermathecal contraction, cleavage furrow contraction in early embryos, and embryonic elongation and morphogenesis. Required for P-cell migration. May also play a role in oocyte cellularization. The polypeptide is Rho-associated protein kinase let-502 (Caenorhabditis briggsae).